The following is a 217-amino-acid chain: 3,4-dihydroxy-2-butanone 4-phosphate synthase (217 aa).

D-ribulose 5-phosphate is bound by residues 37–38 (RE), Asp-42, 150–154 (RGGHT), and Glu-174. Mg(2+) is bound at residue Glu-38. His-153 contributes to the Mg(2+) binding site.

The protein belongs to the DHBP synthase family. As to quaternary structure, homodimer. Requires Mg(2+) as cofactor. Mn(2+) is required as a cofactor.

The enzyme catalyses D-ribulose 5-phosphate = (2S)-2-hydroxy-3-oxobutyl phosphate + formate + H(+). It functions in the pathway cofactor biosynthesis; riboflavin biosynthesis; 2-hydroxy-3-oxobutyl phosphate from D-ribulose 5-phosphate: step 1/1. Functionally, catalyzes the conversion of D-ribulose 5-phosphate to formate and 3,4-dihydroxy-2-butanone 4-phosphate. The sequence is that of 3,4-dihydroxy-2-butanone 4-phosphate synthase from Cronobacter sakazakii (strain ATCC BAA-894) (Enterobacter sakazakii).